The primary structure comprises 272 residues: Serine/arginine-rich splicing factor 5 (272 aa).

The RRM 1 domain maps to 4–74 (CRVFIGRLNP…ERVTIEHARA (71 aa)). The disordered stretch occupies residues 73–105 (RARSRGGRGRGRYSDRFSSRRPRNDRRNAPPVR). Basic residues predominate over residues 74–83 (ARSRGGRGRG). Ser86 is subject to Phosphoserine. An RRM 2 domain is found at 108–181 (NRLIVENLSS…RKIKLIEGSK (74 aa)). The residue at position 167 (Lys167) is an N6-acetyllysine. Residues 174-272 (IKLIEGSKRH…SRSRSVDSGN (99 aa)) are disordered. The span at 182 to 229 (RHSRSRSRSRSRTRSSSRSRSRSRSRSRKSYSRSRSRSRSRSRSKSRS) shows a compositional bias: basic residues. 5 positions are modified to phosphoserine: Ser227, Ser229, Ser233, Ser250, and Ser253. Positions 242–254 (RGSSSRSKSPASV) are enriched in low complexity.

The protein belongs to the splicing factor SR family. As to quaternary structure, interacts (via RS domain) with PHF5A (via N-terminus). Found in a pre-mRNA splicing complex with SRSF4/SFRS4, SRSF5/SFRS5, SNRNP70, SNRPA1, SRRM1 and SRRM2. Post-translationally, extensively phosphorylated on serine residues in the RS domain.

It localises to the nucleus. Its function is as follows. Plays a role in constitutive splicing and can modulate the selection of alternative splice sites. This is Serine/arginine-rich splicing factor 5 (SRSF5) from Homo sapiens (Human).